Here is a 190-residue protein sequence, read N- to C-terminus: dCTP deaminase, dUMP-forming (190 aa).

Residues 101–106 (KSSLGR), D119, 127–129 (TLE), Q148, Y162, and Q174 contribute to the dCTP site. The Proton donor/acceptor role is filled by E129. Residues 161-190 (PYGSSSVGSKYQGQRGPTPSRSYQNFVKND) are disordered. A compositionally biased stretch (polar residues) spans 163–190 (GSSSVGSKYQGQRGPTPSRSYQNFVKND).

Belongs to the dCTP deaminase family. Homotrimer.

The enzyme catalyses dCTP + 2 H2O = dUMP + NH4(+) + diphosphate. It functions in the pathway pyrimidine metabolism; dUMP biosynthesis; dUMP from dCTP: step 1/1. Bifunctional enzyme that catalyzes both the deamination of dCTP to dUTP and the hydrolysis of dUTP to dUMP without releasing the toxic dUTP intermediate. This chain is dCTP deaminase, dUMP-forming, found in Mycolicibacterium vanbaalenii (strain DSM 7251 / JCM 13017 / BCRC 16820 / KCTC 9966 / NRRL B-24157 / PYR-1) (Mycobacterium vanbaalenii).